A 1219-amino-acid chain; its full sequence is ATP-dependent helicase/nuclease subunit A (1219 aa).

The UvrD-like helicase ATP-binding domain occupies 12–477; that stretch reads TRWTDNQWKS…IDLSQNFRSR (466 aa). 33-40 is a binding site for ATP; the sequence is AAAGSGKT. The UvrD-like helicase C-terminal domain maps to 478–786; that stretch reads EEVLTTTNYL…RMMTIHSSKG (309 aa). Positions 997–1016 are disordered; the sequence is PSKQSVSELKRQHETEQSDT. The span at 1004–1016 shows a compositional bias: basic and acidic residues; it reads ELKRQHETEQSDT.

This sequence belongs to the helicase family. AddA subfamily. As to quaternary structure, heterodimer of AddA and AddB/RexB. It depends on Mg(2+) as a cofactor.

It catalyses the reaction Couples ATP hydrolysis with the unwinding of duplex DNA by translocating in the 3'-5' direction.. It carries out the reaction ATP + H2O = ADP + phosphate + H(+). In terms of biological role, the heterodimer acts as both an ATP-dependent DNA helicase and an ATP-dependent, dual-direction single-stranded exonuclease. Recognizes the chi site generating a DNA molecule suitable for the initiation of homologous recombination. The AddA nuclease domain is required for chi fragment generation; this subunit has the helicase and 3' -&gt; 5' nuclease activities. The protein is ATP-dependent helicase/nuclease subunit A of Staphylococcus saprophyticus subsp. saprophyticus (strain ATCC 15305 / DSM 20229 / NCIMB 8711 / NCTC 7292 / S-41).